Here is a 257-residue protein sequence, read N- to C-terminus: Type 2 phosphatidylinositol 4,5-bisphosphate 4-phosphatase (257 aa).

The span at 1 to 10 (MAADGVDERS) shows a compositional bias: basic and acidic residues. Residues 1 to 34 (MAADGVDERSPLLSASHSGSVTPTAPPYLQDSSP) form a disordered region. Over residues 13–23 (LSASHSGSVTP) the composition is skewed to polar residues. Thr-22 is modified (phosphothreonine). Ser-33 carries the post-translational modification Phosphoserine. Residue Cys-107 is part of the active site. The CX5R motif signature appears at 107 to 113 (CKDTSRR). 2 helical membrane passes run 192 to 212 (CCAYITIGMMCIFIGIGLTVG) and 227 to 247 (WAIAYLLGLVCLIRACYWGAI).

Its subcellular location is the late endosome membrane. It localises to the lysosome membrane. It is found in the cytoplasmic vesicle. The protein localises to the phagosome membrane. The protein resides in the cell membrane. The catalysed reaction is a 1,2-diacyl-sn-glycero-3-phospho-(1D-myo-inositol-4,5-bisphosphate) + H2O = a 1,2-diacyl-sn-glycero-3-phospho-(1D-myo-inositol-5-phosphate) + phosphate. Catalyzes the hydrolysis of phosphatidylinositol-4,5-bisphosphate (PtdIns-4,5-P2) to phosphatidylinositol-4-phosphate (PtdIns-4-P). Does not hydrolyze phosphatidylinositol 3,4,5-trisphosphate, phosphatidylinositol 3,4-bisphosphate, inositol 3,5-bisphosphate, inositol 3,4-bisphosphate, phosphatidylinositol 5-monophosphate, phosphatidylinositol 4-monophosphate and phosphatidylinositol 3-monophosphate. Negatively regulates the phagocytosis of large particles by reducing phagosomal phosphatidylinositol 4,5-bisphosphate accumulation during cup formation. This is Type 2 phosphatidylinositol 4,5-bisphosphate 4-phosphatase from Bos taurus (Bovine).